We begin with the raw amino-acid sequence, 526 residues long: Importin subunit alpha-1a (526 aa).

The IBB domain maps to 1 to 58; the sequence is MSLRPSERVEVRRNRYKVAVDAEEGRRRREDNMVEIRKSRREESLLKKRREGLQAQAP. ARM repeat units follow at residues 105–145, 148–187, 190–230, 232–271, 274–313, 316–356, 359–398, and 402–441; these read SPPI…NIAS, SENT…NVAG, PKCR…NFCR, KPQP…YLSD, NDKI…NIVT, DAQT…NITA, KDQI…NATS, and HDQI…NILK.

Belongs to the importin alpha family. Forms a complex with importin subunit beta-1. The whole complex, most stable and composed of importin alpha, importin beta and NLS substrate, is referred to as PTAC or pore targeting complex. Interacts with mungbean yellow mosaic virus capsid protein. Highly expressed in callus, followed by root and etiolated leaf. Low expression in green leaf.

It is found in the cytoplasm. It localises to the perinuclear region. Functions in nuclear protein import. Binds specifically and directly to substrates containing either a simple or bipartite NLS motif. Promotes docking of import substrates to the nuclear envelope. The sequence is that of Importin subunit alpha-1a from Oryza sativa subsp. japonica (Rice).